Here is a 516-residue protein sequence, read N- to C-terminus: DNA-(apurinic or apyrimidinic site) endonuclease 2 (516 aa).

The Mg(2+) site is built by asparagine 8 and glutamate 47. Tyrosine 155 is a catalytic residue. Aspartate 196, asparagine 198, aspartate 302, and histidine 303 together coordinate Mg(2+). The active-site Proton donor/acceptor is aspartate 196. Catalysis depends on histidine 303, which acts as the Proton acceptor. Positions 357–366 (QPSHQIQAQR) are enriched in polar residues. The tract at residues 357–389 (QPSHQIQAQRQPRKACMHSTRLRKSQGGPKRKQ) is disordered. Basic residues predominate over residues 367–389 (QPRKACMHSTRLRKSQGGPKRKQ). A Glycyl lysine isopeptide (Lys-Gly) (interchain with G-Cter in ubiquitin) cross-link involves residue lysine 370. Residues 389–396 (QKNLMSYF) form a required for the interaction and colocalization with PCNA in nuclear foci in presence of oxidative-induced DNA damaging agents region. 4 residues coordinate Zn(2+): cysteine 467, histidine 470, cysteine 493, and cysteine 507. The GRF-type zinc finger occupies 467 to 516 (CGGHREPCVMRTVKKTGPNFGRQFYMCARPRGPPSDPSSRCNFFLWSRPS).

The protein belongs to the DNA repair enzymes AP/ExoA family. Interacts with PCNA. This interaction is increased by misincorporation of uracil in nuclear DNA. Requires Mg(2+) as cofactor. It depends on Mn(2+) as a cofactor. Post-translationally, ubiquitinated by the CUL9-RBX1 complex. Ubiquitinated by MKRN3 at Lys-370 leading to proteasomal degradation. As to expression, expressed in lymphocytes, thymocytes and splenocytes (at protein level). Highly expressed in the thymus and weakly expressed in the bone marrow, spleen, eye, kidney, lung, brain and uterus.

The protein localises to the nucleus. Its subcellular location is the cytoplasm. The protein resides in the mitochondrion. The catalysed reaction is Exonucleolytic cleavage in the 3'- to 5'-direction to yield nucleoside 5'-phosphates.. 3'-5' exonuclease activity is activated by sodium and manganese. 3'-5' exonuclease and 3'-phosphodiesterase activities are stimulated in presence of PCNA. In terms of biological role, functions as a weak apurinic/apyrimidinic (AP) endodeoxyribonuclease in the DNA base excision repair (BER) pathway of DNA lesions induced by oxidative and alkylating agents. Initiates repair of AP sites in DNA by catalyzing hydrolytic incision of the phosphodiester backbone immediately adjacent to the damage, generating a single-strand break with 5'-deoxyribose phosphate and 3'-hydroxyl ends. Also displays double-stranded DNA 3'-5' exonuclease, 3'-phosphodiesterase activities. Shows robust 3'-5' exonuclease activity on 3'-recessed heteroduplex DNA and is able to remove mismatched nucleotides preferentially. Shows fairly strong 3'-phosphodiesterase activity involved in the removal of 3'-damaged termini formed in DNA by oxidative agents. In the nucleus functions in the PCNA-dependent BER pathway. Plays a role in reversing blocked 3' DNA ends, problematic lesions that preclude DNA synthesis. Required for somatic hypermutation (SHM) and DNA cleavage step of class switch recombination (CSR) of immunoglobulin genes. Required for proper cell cycle progression during proliferation of peripheral lymphocytes. The polypeptide is DNA-(apurinic or apyrimidinic site) endonuclease 2 (Apex2) (Mus musculus (Mouse)).